The following is a 600-amino-acid chain: DDB1- and CUL4-associated factor 15 (600 aa).

The disordered stretch occupies residues 1-30 (MAPSSKSERNSGAGSGGGGPGGAGGKRAAG). Positions 13-27 (AGSGGGGPGGAGGKR) are enriched in gly residues. Phosphoserine is present on Ser-50. 4 residues coordinate Zn(2+): Cys-193, Cys-196, Cys-211, and His-214. Residues Phe-231 and 234-235 (AF) contribute to the E7820 site. Pro residues predominate over residues 280 to 295 (PASPPEPQSPELPPAL). The disordered stretch occupies residues 280–316 (PASPPEPQSPELPPALPSFCPEAAPARSSGSPEPSPA). Ser-310 and Ser-314 each carry phosphoserine.

As to quaternary structure, component of the DCX(DCAF15) complex, also named CLR4(DCAF15) complex, composed of DCAF15, DDB1, cullin-4 (CUL4A or CUL4B), DDA1 and RBX1.

The protein operates within protein modification; protein ubiquitination. Aryl sulfonamide anticancer drugs change the substrate specificity of DCAF15 by acting as a molecular glue that promotes binding between DCAF15 and weak affinity interactors, such as RBM39. Its function is as follows. Substrate-recognition component of the DCX(DCAF15) complex, a cullin-4-RING E3 ubiquitin-protein ligase complex that mediates ubiquitination and degradation of target proteins. The DCX(DCAF15) complex acts as a regulator of the natural killer (NK) cells effector functions, possibly by mediating ubiquitination and degradation of cohesin subunits SMC1A and SMC3. May play a role in the activation of antigen-presenting cells (APC) and their interaction with NK cells. Functionally, binding of aryl sulfonamide anticancer drugs, such as indisulam (E7070) or E7820, change the substrate specificity of the DCX(DCAF15) complex, leading to promote ubiquitination and degradation of splicing factor RBM39. RBM39 degradation results in splicing defects and death in cancer cell lines. Aryl sulfonamide anticancer drugs change the substrate specificity of DCAF15 by acting as a molecular glue that promotes binding between DCAF15 and weak affinity interactor RBM39. Aryl sulfonamide anticancer drugs also promote ubiquitination and degradation of RBM23 and PRPF39. The chain is DDB1- and CUL4-associated factor 15 from Homo sapiens (Human).